The primary structure comprises 361 residues: WAT1-related protein At4g01450 (361 aa).

10 consecutive transmembrane segments (helical) span residues tryptophan 8 to valine 28, valine 40 to tryptophan 60, leucine 76 to serine 96, glycine 103 to phenylalanine 123, isoleucine 132 to methionine 152, tryptophan 177 to isoleucine 197, tyrosine 209 to isoleucine 229, leucine 243 to methionine 263, valine 273 to isoleucine 293, and isoleucine 298 to tryptophan 318. EamA domains lie at alanine 21–isoleucine 142 and tryptophan 194–leucine 317.

This sequence belongs to the drug/metabolite transporter (DMT) superfamily. Plant drug/metabolite exporter (P-DME) (TC 2.A.7.4) family.

Its subcellular location is the membrane. In Arabidopsis thaliana (Mouse-ear cress), this protein is WAT1-related protein At4g01450.